The following is a 300-amino-acid chain: 4-hydroxy-tetrahydrodipicolinate synthase (300 aa).

Position 55 (threonine 55) interacts with pyruvate. Residue tyrosine 143 is the Proton donor/acceptor of the active site. Lysine 171 serves as the catalytic Schiff-base intermediate with substrate. Residue isoleucine 211 participates in pyruvate binding.

This sequence belongs to the DapA family. Homotetramer; dimer of dimers.

Its subcellular location is the cytoplasm. The enzyme catalyses L-aspartate 4-semialdehyde + pyruvate = (2S,4S)-4-hydroxy-2,3,4,5-tetrahydrodipicolinate + H2O + H(+). Its pathway is amino-acid biosynthesis; L-lysine biosynthesis via DAP pathway; (S)-tetrahydrodipicolinate from L-aspartate: step 3/4. Its function is as follows. Catalyzes the condensation of (S)-aspartate-beta-semialdehyde [(S)-ASA] and pyruvate to 4-hydroxy-tetrahydrodipicolinate (HTPA). The sequence is that of 4-hydroxy-tetrahydrodipicolinate synthase from Mycobacterium leprae (strain Br4923).